Reading from the N-terminus, the 687-residue chain is MGQEKLYTEKELSWLSFNERVLQEAADKSNPLIERMRFLGIYSNNLDEFYKVRFADLKRRILINEEQGSAVTSRHLLKKIQSKVVKADQEFDGLYNDLLLEMARNQIFLVNERQISENQQTWLKQYFKQHLRQHITPILINHDTNLVQFLKDDYTYLAVEIIRGQDIAYALLEIPSDKIPRFVNLPPEAPRRRKPMILLDNILRFCLDEIFKGFFDYDALNAYSMKMTRDAEYDLVTEMESSLLELMSSSLKQRLTAEPVRFVYQRDMPDEMVELLRNKLGISNDDSVIAGGRYHNFKDFINFPNVGKSNLVNRPMPRLRHVWFDKFRNGFDAIREQDVLLYYPYHTFEHVLELLRQASFDPSVLAIKINIYRVAKDSRIIDSMIHAAHNGKKVTVVVELQARFDEEANIHWAKSLTAAGVHVIFSAPGLKIHAKLFLISRLENDEIVRYAHIGTGNFNEKTARIYTDYSLLTADARITNEVRRVFNFIENPYRPVTFDNLMVSPQNSRLILYQLIDQEIIHAQAGESAGITLKINNLVDKGLVDRLYSASSAGVKIRLLVRGMCSLIPNMPGISDNIQVTSIVDRFLEHDRVYVFENKGDKLVYLSSADWMTRNIDYRIEVAVSLLDPKLKQRVLDILEILFNDTVKARYIDKELSNRYVPRGNRRKVRAQIAIYDYLKALEQPEQ.

An ATP-binding site is contributed by Asn45. Arg373 and Arg403 together coordinate Mg(2+). Catalysis depends on His433, which acts as the Phosphohistidine intermediate. The ATP site is built by Tyr466, Arg562, and His590. One can recognise a PLD phosphodiesterase domain in the interval 585–615; that stretch reads DRFLEHDRVYVFENKGDKLVYLSSADWMTRN.

It belongs to the polyphosphate kinase 1 (PPK1) family. It depends on Mg(2+) as a cofactor. Post-translationally, an intermediate of this reaction is the autophosphorylated ppk in which a phosphate is covalently linked to a histidine residue through a N-P bond.

It catalyses the reaction [phosphate](n) + ATP = [phosphate](n+1) + ADP. Its function is as follows. Catalyzes the reversible transfer of the terminal phosphate of ATP to form a long-chain polyphosphate (polyP). The polypeptide is Polyphosphate kinase (Yersinia pestis).